We begin with the raw amino-acid sequence, 538 residues long: Calcium-dependent protein kinase 8 (538 aa).

The disordered stretch occupies residues 1–26 (MGNCCGTPATAEEGGKRRRRGKQKKA). The N-myristoyl glycine moiety is linked to residue Gly2. The segment covering 16–25 (KRRRRGKQKK) has biased composition (basic residues). The 259-residue stretch at 64–322 (YELGGELGRG…AEQVLEHPWL (259 aa)) folds into the Protein kinase domain. ATP contacts are provided by residues 70-78 (LGRGEFGIT) and Lys93. Asp188 (proton acceptor) is an active-site residue. The autoinhibitory domain stretch occupies residues 328–358 (MPDIPLGDAVRARLQQFAAMNKLKKKALKVI). EF-hand domains lie at 365-400 (EEAA…LGNQ), 401-436 (MPDS…VRKI), 437-472 (GNDE…EIDG), and 473-508 (NDED…GTDW). Asp378, Ser380, Asn382, Gln384, Asp389, Asp414, Asp416, Asn418, Glu425, Asp450, Asn452, Ser454, Tyr456, Glu461, Asp486, Asp488, Asp490, Lys492, and Glu497 together coordinate Ca(2+).

The protein belongs to the protein kinase superfamily. Ser/Thr protein kinase family. CDPK subfamily.

The protein resides in the membrane. The catalysed reaction is L-seryl-[protein] + ATP = O-phospho-L-seryl-[protein] + ADP + H(+). The enzyme catalyses L-threonyl-[protein] + ATP = O-phospho-L-threonyl-[protein] + ADP + H(+). Its activity is regulated as follows. Activated by calcium. Autophosphorylation may play an important role in the regulation of the kinase activity. In terms of biological role, may play a role in signal transduction pathways that involve calcium as a second messenger. The polypeptide is Calcium-dependent protein kinase 8 (Oryza sativa subsp. japonica (Rice)).